The primary structure comprises 278 residues: Probable cytochrome c oxidase subunit 3 (278 aa).

6 helical membrane-spanning segments follow: residues 21–41 (PWPILTSFALLLLVIGGISSM), 46–66 (FNMYILSAGVISVIYCLYSWW), 89–109 (IGMVLFILTETVFFSVFFASF), 174–194 (CVTALAFTIVLGIFFTLMQVY), 212–232 (FYLATGFHGAHVVIGTIFLIV), and 256–276 (AWYWHFVDVVWLFLFTFVYIL).

This sequence belongs to the cytochrome c oxidase subunit 3 family.

The protein resides in the cell membrane. It carries out the reaction 4 Fe(II)-[cytochrome c] + O2 + 8 H(+)(in) = 4 Fe(III)-[cytochrome c] + 2 H2O + 4 H(+)(out). In Rickettsia prowazekii (strain Madrid E), this protein is Probable cytochrome c oxidase subunit 3 (ctaE).